Consider the following 341-residue polypeptide: Galactofuranose transporter permease protein YtfT (341 aa).

Residues 1–25 (MMPQSLPDTTTPKRRFRWPTGMPQL) lie on the Cytoplasmic side of the membrane. A helical transmembrane segment spans residues 26–46 (VALLLVLLVDSLVAPHFWQVV). The Periplasmic segment spans residues 47-65 (LQDGRLFGSPIDILNRAAP). The next 2 membrane-spanning stretches (helical) occupy residues 66-86 (VALL…DLSV) and 87-107 (GAVM…GFSL). A topological domain (periplasmic) is located at residue Pro108. A helical membrane pass occupies residues 109–129 (IVLLSALGTGILAGLWNGILV). At 130–136 (AILKIQP) the chain is on the cytoplasmic side. Residues 137–157 (FVATLILMVAGRGVAQLITAG) traverse the membrane as a helical segment. Residues 158-174 (QIVTFNSPDLSWFGSGS) lie on the Periplasmic side of the membrane. Residues 175-195 (LLFLPTPVIIAVLTLILFWLL) traverse the membrane as a helical segment. The Cytoplasmic segment spans residues 196–223 (TRKTALGMFIEAVGINIRAAKNAGVNTR). A helical membrane pass occupies residues 224–244 (IIVMLTYVLSGLCAAIAGIIV). The Periplasmic segment spans residues 245-255 (AADIRGADANN). A helical transmembrane segment spans residues 256–276 (AGLWLELDAILAVVIGGGSLM). The Cytoplasmic segment spans residues 277–281 (GGRFN). 2 helical membrane passes run 282 to 302 (LLLS…ILLS) and 303 to 323 (GFPP…VLIV). Topologically, residues 324-341 (QSQRFISLIKGVRSRDKT) are cytoplasmic.

This sequence belongs to the binding-protein-dependent transport system permease family. AraH/RbsC subfamily. As to quaternary structure, the complex is composed of two ATP-binding proteins (YtfR), two transmembrane proteins (YtfT and YjfF) and a solute-binding protein (YtfQ).

The protein localises to the cell inner membrane. Its function is as follows. Part of the ABC transporter complex YtfQRT-YjfF involved in galactofuranose transport. Probably responsible for the translocation of the substrate across the membrane. This chain is Galactofuranose transporter permease protein YtfT (ytfT), found in Escherichia coli (strain K12).